The following is a 360-amino-acid chain: Zinc finger protein ztf-2 (360 aa).

The tract at residues 19–41 is disordered; sequence LSSPEKEHRRKRRRGEVANPSNT. 3 consecutive C2H2-type zinc fingers follow at residues 87–109, 115–138, and 180–203; these read RTCS…KRVH, FKCR…AKTH, and YRCQ…SHLH. Positions 248-260 are enriched in low complexity; sequence PLSPCRSESSSDS. Residues 248–272 are disordered; sequence PLSPCRSESSSDSGIQTDPEEEASI.

Expressed in pharyngeal epithelium/arcade, which connects the pharynx to the mouth.

Functionally, transcription factor. Represses gene expression, probably via binding to DNA consensus sequence 5'-[AT][CT]TTCC[AC][AG]-3' in promoter regions. May play a role in pharynx morphogenesis. The sequence is that of Zinc finger protein ztf-2 from Caenorhabditis elegans.